Here is a 194-residue protein sequence, read N- to C-terminus: Peptidyl-tRNA hydrolase (194 aa).

Tyr-17 contacts tRNA. Catalysis depends on His-22, which acts as the Proton acceptor. 3 residues coordinate tRNA: Tyr-68, Asn-70, and Asn-116.

Belongs to the PTH family. As to quaternary structure, monomer.

The protein localises to the cytoplasm. It carries out the reaction an N-acyl-L-alpha-aminoacyl-tRNA + H2O = an N-acyl-L-amino acid + a tRNA + H(+). In terms of biological role, hydrolyzes ribosome-free peptidyl-tRNAs (with 1 or more amino acids incorporated), which drop off the ribosome during protein synthesis, or as a result of ribosome stalling. Catalyzes the release of premature peptidyl moieties from peptidyl-tRNA molecules trapped in stalled 50S ribosomal subunits, and thus maintains levels of free tRNAs and 50S ribosomes. The sequence is that of Peptidyl-tRNA hydrolase from Pseudomonas entomophila (strain L48).